The chain runs to 385 residues: Succinyl-diaminopimelate desuccinylase (385 aa).

His-73 provides a ligand contact to Zn(2+). The active site involves Asp-75. Zn(2+) is bound at residue Asp-106. Residue Glu-141 is the Proton acceptor of the active site. Zn(2+) contacts are provided by Glu-142, Glu-170, and His-359.

This sequence belongs to the peptidase M20A family. DapE subfamily. In terms of assembly, homodimer. It depends on Zn(2+) as a cofactor. Requires Co(2+) as cofactor.

The enzyme catalyses N-succinyl-(2S,6S)-2,6-diaminopimelate + H2O = (2S,6S)-2,6-diaminopimelate + succinate. The protein operates within amino-acid biosynthesis; L-lysine biosynthesis via DAP pathway; LL-2,6-diaminopimelate from (S)-tetrahydrodipicolinate (succinylase route): step 3/3. Its function is as follows. Catalyzes the hydrolysis of N-succinyl-L,L-diaminopimelic acid (SDAP), forming succinate and LL-2,6-diaminopimelate (DAP), an intermediate involved in the bacterial biosynthesis of lysine and meso-diaminopimelic acid, an essential component of bacterial cell walls. The protein is Succinyl-diaminopimelate desuccinylase of Methylorubrum extorquens (strain PA1) (Methylobacterium extorquens).